Consider the following 1073-residue polypeptide: Probable nuclear hormone receptor HR38 (1073 aa).

7 disordered regions span residues 55–87 (NLNA…LPPP), 150–185 (TPAP…SNCD), 263–326 (TQTA…LVSP), 437–458 (ALHA…QQHQ), 492–514 (KYNS…APTP), 529–579 (PPLS…NSGG), and 618–640 (GQQQ…NGER). 3 stretches are compositionally biased toward low complexity: residues 59-82 (PTHQ…QQHP), 175-185 (DSNSDSNSNCD), and 263-277 (TQTA…ASAA). The span at 279 to 291 (HHQHHNHLLHQQH) shows a compositional bias: basic residues. Low complexity-rich tracts occupy residues 292 to 326 (HNQQ…LVSP), 441 to 458 (QQQQ…QQHQ), and 495 to 514 (SSSG…APTP). Over residues 619–636 (QQQQQQQQSYQQHNYNSH) the composition is skewed to low complexity. The segment at residues 741–816 (SQLCAVCGDT…VGMVKEVVRT (76 aa)) is a DNA-binding region (nuclear receptor). 2 NR C4-type zinc fingers span residues 744 to 764 (CAVC…CEGC) and 780 to 804 (CLAD…FQKC). The disordered stretch occupies residues 819-841 (LKGRRGRLPSKPKSPQESPPSPP). The NR LBD domain maps to 840-1070 (PPISLITALV…ALIENMFVTT (231 aa)).

Belongs to the nuclear hormone receptor family. NR4 subfamily. In terms of assembly, forms a heterodimer with USP. As to expression, ubiquitously expressed in preblastoderm embryos, specifically in central nervous system and intestinal tract. Highly expressed in third instar larval imaginal disks and brain complexes, but not in ovaries.

It is found in the nucleus. Its function is as follows. Binds to NGFI-B response elements. Plays an important role in late stages of epidermal metamorphosis. This Drosophila melanogaster (Fruit fly) protein is Probable nuclear hormone receptor HR38 (Hr38).